The primary structure comprises 116 residues: Ribosome-binding factor A (116 aa).

Belongs to the RbfA family. In terms of assembly, monomer. Binds 30S ribosomal subunits, but not 50S ribosomal subunits or 70S ribosomes.

Its subcellular location is the cytoplasm. In terms of biological role, one of several proteins that assist in the late maturation steps of the functional core of the 30S ribosomal subunit. Associates with free 30S ribosomal subunits (but not with 30S subunits that are part of 70S ribosomes or polysomes). Required for efficient processing of 16S rRNA. May interact with the 5'-terminal helix region of 16S rRNA. The polypeptide is Ribosome-binding factor A (Streptococcus pneumoniae (strain ATCC 700669 / Spain 23F-1)).